A 943-amino-acid polypeptide reads, in one-letter code: Translation initiation factor IF-2 (943 aa).

Residues 29-357 (LSVKSHSSSV…KPVTERKFHE (329 aa)) are disordered. Basic and acidic residues-rich tracts occupy residues 69–82 (PKEE…DKAS), 112–137 (FKAE…DNRN), 145–155 (QGKRHNNDRRN), 163–196 (DHNK…RDNA), and 224–253 (RQSE…EKQQ). Positions 254 to 266 (AEVAVQKAAAETK) are enriched in low complexity. Over residues 296–309 (KSRDNRRVNEDGPK) the composition is skewed to basic and acidic residues. A compositionally biased stretch (low complexity) spans 313–332 (NNKWNNQNQVRNQRNSNWNK). The region spanning 445-614 (ERAPVVTIMG…LLVAEVEELK (170 aa)) is the tr-type G domain. The segment at 454 to 461 (GHVDHGKT) is G1. 454–461 (GHVDHGKT) serves as a coordination point for GTP. A G2 region spans residues 479-483 (GITQH). A G3 region spans residues 500–503 (DTPG). GTP is bound by residues 500–504 (DTPGH) and 554–557 (NKID). Positions 554–557 (NKID) are G4. The segment at 590 to 592 (SAK) is G5.

This sequence belongs to the TRAFAC class translation factor GTPase superfamily. Classic translation factor GTPase family. IF-2 subfamily.

Its subcellular location is the cytoplasm. Its function is as follows. One of the essential components for the initiation of protein synthesis. Protects formylmethionyl-tRNA from spontaneous hydrolysis and promotes its binding to the 30S ribosomal subunits. Also involved in the hydrolysis of GTP during the formation of the 70S ribosomal complex. The protein is Translation initiation factor IF-2 of Streptococcus thermophilus (strain CNRZ 1066).